The sequence spans 275 residues: Phospholipid scramblase (275 aa).

The helical transmembrane segment at 256–272 (WKMMLLAFALFLDYMYY) threads the bilayer.

Belongs to the phospholipid scramblase family. Forms homooligomers in the presence of calcium. Ca(2+) is required as a cofactor. The cofactor is Mg(2+).

The protein resides in the membrane. It localises to the cell membrane. It carries out the reaction a 1,2-diacyl-sn-glycero-3-phosphoethanolamine(in) = a 1,2-diacyl-sn-glycero-3-phosphoethanolamine(out). Catalyzes calcium-induced ATP-independent rapid bidirectional and non-specific movement of phospholipids (lipid scrambling or lipid flip-flop) between the inner and outer leaflet of the plasma membrane resulting in collapse of the phospholipid asymmetry. Preferentially, mediates calcium-dependent phosphatidylethanolamine externalization. During the liver stage, plays a role in the interaction with, and thus invasion of, host hepatocytes. Dispensable for host erythrocyte invasion and asexual parasite development. The chain is Phospholipid scramblase from Plasmodium falciparum (isolate 3D7).